The primary structure comprises 100 residues: Urease subunit gamma (100 aa).

Belongs to the urease gamma subunit family. In terms of assembly, heterotrimer of UreA (gamma), UreB (beta) and UreC (alpha) subunits. Three heterotrimers associate to form the active enzyme.

The protein localises to the cytoplasm. The enzyme catalyses urea + 2 H2O + H(+) = hydrogencarbonate + 2 NH4(+). It participates in nitrogen metabolism; urea degradation; CO(2) and NH(3) from urea (urease route): step 1/1. This Rhizobium meliloti (strain 1021) (Ensifer meliloti) protein is Urease subunit gamma.